A 324-amino-acid chain; its full sequence is Phospho-N-acetylmuramoyl-pentapeptide-transferase (324 aa).

9 helical membrane passes run 5–25, 51–71, 77–97, 117–137, 147–167, 176–196, 203–223, 227–248, and 302–322; these read VILF…PIFI, TPTM…IVMI, ISPE…LGFL, LIGQ…YQFA, VSFD…VGGS, LDGL…ILAW, VAIF…FNAH, VFMG…AILT, and VVVT…YIEV.

Belongs to the glycosyltransferase 4 family. MraY subfamily. The cofactor is Mg(2+).

The protein resides in the cell membrane. It catalyses the reaction UDP-N-acetyl-alpha-D-muramoyl-L-alanyl-gamma-D-glutamyl-meso-2,6-diaminopimeloyl-D-alanyl-D-alanine + di-trans,octa-cis-undecaprenyl phosphate = di-trans,octa-cis-undecaprenyl diphospho-N-acetyl-alpha-D-muramoyl-L-alanyl-D-glutamyl-meso-2,6-diaminopimeloyl-D-alanyl-D-alanine + UMP. The protein operates within cell wall biogenesis; peptidoglycan biosynthesis. In terms of biological role, catalyzes the initial step of the lipid cycle reactions in the biosynthesis of the cell wall peptidoglycan: transfers peptidoglycan precursor phospho-MurNAc-pentapeptide from UDP-MurNAc-pentapeptide onto the lipid carrier undecaprenyl phosphate, yielding undecaprenyl-pyrophosphoryl-MurNAc-pentapeptide, known as lipid I. In Bacillus pumilus (strain SAFR-032), this protein is Phospho-N-acetylmuramoyl-pentapeptide-transferase.